The primary structure comprises 85 residues: ELKEMLLKKYSGCLSRLRSEFLKKRKKGKLPKDARSALMDWWNTHYRWPYPTEEDKVRLAAMTGLDPKQINNWFINQRKRHWKPS.

The 21-residue stretch at 1-21 (ELKEMLLKKYSGCLSRLRSEF) folds into the ELK domain. The homeobox; TALE-type DNA-binding region spans 22–85 (LKKRKKGKLP…NQRKRHWKPS (64 aa)).

It belongs to the TALE/KNOX homeobox family. In terms of tissue distribution, strongly expressed in ear inflorescence primordia and shoot meristem. Weakly expressed in embryos. Absent from leaves.

It localises to the nucleus. In terms of biological role, probably binds to the DNA sequence 5'-TGAC-3'. The sequence is that of Homeobox protein knotted-1-like 5 (KNOX5) from Zea mays (Maize).